The sequence spans 283 residues: Phosphate import ATP-binding protein PstB (283 aa).

Positions 1–20 are enriched in polar residues; it reads MAQTLAQTKQISQSHTFDVS. Residues 1-32 form a disordered region; the sequence is MAQTLAQTKQISQSHTFDVSQSHHKTPDDTNS. The region spanning 37 to 278 is the ABC transporter domain; sequence YSTQNLDLWY…PSNKKTEDYI (242 aa). Position 69-76 (69-76) interacts with ATP; sequence GPSGCGKS.

This sequence belongs to the ABC transporter superfamily. Phosphate importer (TC 3.A.1.7) family. As to quaternary structure, the complex is composed of two ATP-binding proteins (PstB), two transmembrane proteins (PstC and PstA) and a solute-binding protein (PstS).

The protein localises to the cell membrane. It carries out the reaction phosphate(out) + ATP + H2O = ADP + 2 phosphate(in) + H(+). Part of the ABC transporter complex PstSACB involved in phosphate import. Responsible for energy coupling to the transport system. This is Phosphate import ATP-binding protein PstB from Staphylococcus aureus (strain USA300).